The chain runs to 333 residues: Glycerol-3-phosphate dehydrogenase [NAD(P)+] (333 aa).

Residues Trp-13, Lys-33, and Lys-108 each coordinate NADPH. Residues Lys-108 and Gly-138 each contribute to the sn-glycerol 3-phosphate site. NADPH is bound at residue Ser-142. The sn-glycerol 3-phosphate site is built by Lys-193, Asp-246, Ser-256, Arg-257, and Asn-258. The active-site Proton acceptor is the Lys-193. Arg-257 is a binding site for NADPH. NADPH is bound by residues Val-281 and Glu-283.

Belongs to the NAD-dependent glycerol-3-phosphate dehydrogenase family.

It localises to the cytoplasm. The catalysed reaction is sn-glycerol 3-phosphate + NAD(+) = dihydroxyacetone phosphate + NADH + H(+). It catalyses the reaction sn-glycerol 3-phosphate + NADP(+) = dihydroxyacetone phosphate + NADPH + H(+). Its pathway is membrane lipid metabolism; glycerophospholipid metabolism. In terms of biological role, catalyzes the reduction of the glycolytic intermediate dihydroxyacetone phosphate (DHAP) to sn-glycerol 3-phosphate (G3P), the key precursor for phospholipid synthesis. This Bifidobacterium longum (strain DJO10A) protein is Glycerol-3-phosphate dehydrogenase [NAD(P)+].